Consider the following 548-residue polypeptide: Sterol esterase TGL1 (548 aa).

Residue methionine 1 is modified to N-acetylmethionine; partial. At 1 to 13 (MYFPFLGRLSITD) the chain is on the lumenal side. A helical transmembrane segment spans residues 14–34 (YIIVVLVYIESIISSVLKLIP). Residues 35–548 (QPMINLFEWL…TTALDALNKE (514 aa)) are Cytoplasmic-facing. Residues 107–402 (VVYLHHGLLM…NYEHLDLIWG (296 aa)) enclose the AB hydrolase-1 domain. Residues 199 to 203 (GFSQG) carry the GXSXG motif. The active-site Nucleophile is the serine 201. A Glycyl lysine isopeptide (Lys-Gly) (interchain with G-Cter in ubiquitin) cross-link involves residue lysine 246. Residues aspartate 369 and histidine 396 each act as charge relay system in the active site. 2 disordered regions span residues 449 to 477 (TTHP…EADE) and 496 to 516 (IDED…HKEQ). Phosphoserine is present on residues serine 462 and serine 466. Residues 502 to 516 (NEHQDDTEDQIHKEQ) show a composition bias toward basic and acidic residues. Phosphoserine occurs at positions 521 and 538. The tract at residues 528 to 548 (KDLRQLDANSSTTALDALNKE) is disordered. Threonine 539 is subject to Phosphothreonine.

The protein belongs to the AB hydrolase superfamily. In terms of processing, not N-glycosylated.

It is found in the lipid droplet. Its subcellular location is the membrane. It carries out the reaction a sterol ester + H2O = a sterol + a fatty acid + H(+). Its function is as follows. Mediates the hydrolysis of steryl esters (SE). Preferentially hydrolyzes ergosteryl and zymosteryl esters. Required for mobilization of SEs from lipid particles/droplets, thereby playing a central role in lipid metabolism and sterol homeostasis. Sterol intermediates stored in SE and set free by SE hydrolases are recycled to the sterol biosynthetic pathway and converted to the final product, ergosterol, in the endoplasmic reticulum. Also has weak lipase activity toward triglycerides at neutral pH, however, the physiological relevance of this activity is unclear. The polypeptide is Sterol esterase TGL1 (TGL1) (Saccharomyces cerevisiae (strain ATCC 204508 / S288c) (Baker's yeast)).